The following is a 344-amino-acid chain: Lipase chaperone (344 aa).

The helical transmembrane segment at 14 to 34 threads the bilayer; that stretch reads AAIYGGVGLAAVAGVAMWSGA.

It belongs to the lipase chaperone family.

The protein localises to the cell inner membrane. May be involved in the folding of the extracellular lipase during its passage through the periplasm. The chain is Lipase chaperone from Burkholderia cenocepacia (strain ATCC BAA-245 / DSM 16553 / LMG 16656 / NCTC 13227 / J2315 / CF5610) (Burkholderia cepacia (strain J2315)).